Consider the following 122-residue polypeptide: Large ribosomal subunit protein uL14c (122 aa).

This sequence belongs to the universal ribosomal protein uL14 family. Part of the 50S ribosomal subunit.

Its subcellular location is the plastid. Functionally, binds to 23S rRNA. In Cuscuta obtusiflora (Peruvian dodder), this protein is Large ribosomal subunit protein uL14c.